The sequence spans 458 residues: UPF0210 protein Mevan_0738 (458 aa).

This sequence belongs to the UPF0210 family.

The sequence is that of UPF0210 protein Mevan_0738 from Methanococcus vannielii (strain ATCC 35089 / DSM 1224 / JCM 13029 / OCM 148 / SB).